Consider the following 1373-residue polypeptide: MVSLRDNIEAQPLSHNRRIRKNFGHINLVADIPNLIEIQKNSYEKNFLQLNIKDSERKNKGLQSILNSIFPISDSSNIANLEFVKYEFDTPKYDVEECSQRSLSYAAPLKVTLRLSIWDIDEDTGTREIKGIKEQEVYMGDIPLMTKNGTFIINGTERVVVSQMHRSPGVFFYHDEGKVHSSGKLLYSARVIPYRGSWLDLEFDAKDVIYFRIDRKRKLYITTLLRAIGMSTEEIIKFYYNSVTYKLVKNKGWAVKFIPQHITAHRLTSDLVDADTGNILLKAGQKITPRLAKKYFGEGLNNILVAHETLIGKYLSEDLRDPTSDEVLAKIGEMITADMLNVINALKIKNVNVLVINPQSGPYIRNTLFADKNQDREAALCDIFRVLRPGEPANIEAAESLFYNLFFDVDRYDLSEVGRIKMNSRLELNISEEVTVLTIDDIKNIVRVLVELKDGKGIIDDIDHLGNRRVRSVGELIENQFRIGLVRMEKSVIERMSAGDVDTVMPHDLVNSKILVSVVKEFFNTSQLSQFMDQTNPLSEITHKRRLSALGPGGLSRDRAGFEVRDVHPTHYGRICPIETPEGQNIGLINSMATYARINKHGFIESPYRRVKDGCVTDEVVYLSAIEEGKYKIGQANSKVNKDGKLQGEFINCRVEGGNFVMVEPYEVDFIDVTPMQVVSVAASLIPFLENDDANRALMGSNMQRQAVPLIKTDAPFVGTGVEGVVAKDSGASVLALHDGIVEQVDSNRIVIRTLEQKVDGSPSVDIYNLLKFQKSNHNTCINQKPLVKVGHYVKKNDIIADGPSTDNGEIALGRNVLVAFLPWNGYNFEDSILISERIVKEDVFTSIHIEEFEVIARDTRLGPEEITRDIPNVSEEALRHLDEVGIIYIGAEVKAGDILVGKVTPKSESPITPEEKLLRAIFGEKAFDVKDSSLHVPSGVSGTVVEVRVFSRRGVEKDQRAIAIEKQQIEKLAKDRDDELEIIEHFVFSWLEKLLVGQVIINGPKQVKVGQTITTEMLKGLSKGQFWQITVEDANVMNEIEQIKTHYDEKKEALDKRFATKVEKLQSGDDLPQGALKVVKVFIATKHKLQPGDKMAGRHGNKGVISRIVPEEDMPFLEDGTVVDIVLNPLGLPSRMNIGQILETHLGWASINLAKKISTLVKEYKNKHIGIEQIKKFLIELYGENINSILERPEEEIISFCKKVSKGVHFATPVFDGAKVQDVKDMLKLAGQDPSGQVKLIDGRTGEYFDRLVTVGQKYLLKLHHLVDNKIHSRSIGPYSLVTQQPLGGKSHFGGQRFGEMECWALQAYGAAYTLQEMLTVKSDDVNGRIKTYDSIVRGENNFESGIPESFNVMIKEFRSLCLNVKLEVTSS.

This sequence belongs to the RNA polymerase beta chain family. The RNAP catalytic core consists of 2 alpha, 1 beta, 1 beta' and 1 omega subunit. When a sigma factor is associated with the core the holoenzyme is formed, which can initiate transcription.

It catalyses the reaction RNA(n) + a ribonucleoside 5'-triphosphate = RNA(n+1) + diphosphate. DNA-dependent RNA polymerase catalyzes the transcription of DNA into RNA using the four ribonucleoside triphosphates as substrates. The polypeptide is DNA-directed RNA polymerase subunit beta (Rickettsia massiliae).